The following is an 85-amino-acid chain: Three-finger toxin MALT0044C (85 aa).

The N-terminal stretch at 1-21 (MKTLLLTLVVVTIVCLDLGNT) is a signal peptide. Disulfide bonds link Cys24-Cys45, Cys38-Cys63, Cys67-Cys78, and Cys79-Cys84.

The protein belongs to the three-finger toxin family. Short-chain subfamily. As to expression, expressed by the venom gland.

The protein localises to the secreted. The protein is Three-finger toxin MALT0044C of Micrurus altirostris (Uruguayan coral snake).